We begin with the raw amino-acid sequence, 197 residues long: Phosphoheptose isomerase (197 aa).

Positions 36–197 (MVQCLVSEGK…IDQQLFGSTE (162 aa)) constitute an SIS domain. 51–53 (NGG) contributes to the substrate binding site. Zn(2+) contacts are provided by His60 and Glu64. Substrate contacts are provided by residues Glu64, 93-94 (ND), 119-121 (STS), Ser124, and Gln174. Zn(2+) is bound by residues Gln174 and His182.

It belongs to the SIS family. GmhA subfamily. Homotetramer. Zn(2+) is required as a cofactor.

It is found in the cytoplasm. It carries out the reaction 2 D-sedoheptulose 7-phosphate = D-glycero-alpha-D-manno-heptose 7-phosphate + D-glycero-beta-D-manno-heptose 7-phosphate. The protein operates within carbohydrate biosynthesis; D-glycero-D-manno-heptose 7-phosphate biosynthesis; D-glycero-alpha-D-manno-heptose 7-phosphate and D-glycero-beta-D-manno-heptose 7-phosphate from sedoheptulose 7-phosphate: step 1/1. In terms of biological role, catalyzes the isomerization of sedoheptulose 7-phosphate in D-glycero-D-manno-heptose 7-phosphate. The sequence is that of Phosphoheptose isomerase from Chromohalobacter salexigens (strain ATCC BAA-138 / DSM 3043 / CIP 106854 / NCIMB 13768 / 1H11).